A 254-amino-acid polypeptide reads, in one-letter code: MNAMTAFSLNGAAPLANADELEAALRQIGTARYHNLHPFHRLLHGGKLNKGQVQAWALNRYYYQSSIPIKDAVVISRFRDRATRVEWRHRIEDHDGDLGSEGGIERWLKLTEGLGLDSGYVESTQGILPATRFAVDAYVHFVRDRTPLEAIASSLTELFAPNLHEERIAGMLAHYDFVNPEIMSYFKRRLEQAPRDTDFALRYVKQHATTPAEREAVCNALIFKTNVLWAQLDALHHAYVDGHIPPGAFVPQGF.

Belongs to the PqqC family.

The enzyme catalyses 6-(2-amino-2-carboxyethyl)-7,8-dioxo-1,2,3,4,7,8-hexahydroquinoline-2,4-dicarboxylate + 3 O2 = pyrroloquinoline quinone + 2 H2O2 + 2 H2O + H(+). Its pathway is cofactor biosynthesis; pyrroloquinoline quinone biosynthesis. Ring cyclization and eight-electron oxidation of 3a-(2-amino-2-carboxyethyl)-4,5-dioxo-4,5,6,7,8,9-hexahydroquinoline-7,9-dicarboxylic-acid to PQQ. The protein is Pyrroloquinoline-quinone synthase of Rhodopseudomonas palustris (strain TIE-1).